A 2383-amino-acid polypeptide reads, in one-letter code: Highly reducing polyketide synthase SAT13 (2383 aa).

The region spanning 6 to 433 (PVPLAIVGIA…GTNAHAVLER (428 aa)) is the Ketosynthase family 3 (KS3) domain. Residues Cys-180, His-315, and His-355 each act as for beta-ketoacyl synthase activity in the active site. The malonyl-CoA:ACP transacylase (MAT) domain stretch occupies residues 536-828 (FIFTGQGAQW…IGPHSALAGP (293 aa)). Ser-626 acts as the For malonyltransferase activity in catalysis. The segment at 922–1062 (HDLLGLRMTE…GNIVVVFKTS (141 aa)) is N-terminal hotdog fold. The interval 922–1239 (HDLLGLRMTE…GMELRSFVAR (318 aa)) is dehydratase (DH) domain. The PKS/mFAS DH domain maps to 922–1242 (HDLLGLRMTE…LRSFVARDSN (321 aa)). His-954 (proton acceptor; for dehydratase activity) is an active-site residue. The tract at residues 1087–1242 (GKLTHAGQLY…LRSFVARDSN (156 aa)) is C-terminal hotdog fold. The active-site Proton donor; for dehydratase activity is Asp-1152. The tract at residues 1669-1977 (DGQNRLVFVE…KQGSMKKCVL (309 aa)) is enoylreductase (ER) domain. Residues 2001 to 2184 (ATYVVAGGLG…MSLNIGGIKD (184 aa)) are catalytic ketoreductase (KRc) domain. A Carrier domain is found at 2287–2364 (EISEFVARSI…DLAQKVVSRS (78 aa)). Ser-2324 bears the O-(pantetheine 4'-phosphoryl)serine mark.

It participates in mycotoxin biosynthesis. Functionally, highly reducing polyketide synthase; part of the satratoxin SC2 cluster involved in the biosynthesis of satratoxins, trichothecene mycotoxins that are associated with human food poisonings. Satratoxins are suggested to be made by products of multiple gene clusters (SC1, SC2 and SC3) that encode 21 proteins in all, including polyketide synthases, acetyltransferases, and other enzymes expected to modify the trichothecene skeleton. SC1 encodes 10 proteins, SAT1 to SAT10. The largest are SAT8, which encodes a putative polyketide synthase (PKS) with a conventional non-reducing architecture, and SAT10, a putative protein containing four ankyrin repeats and thus may be involved in protein scaffolding. The putative short-chain reductase SAT3 may assist the PKS in some capacity. SAT6 contains a secretory lipase domain and acts probably as a trichothecene esterase. SAT5 encodes a putative acetyltransferase, and so, with SAT6, may affect endogenous protection from toxicity. The probable transcription factor SAT9 may regulate the expression of the SC1 cluster. SC2 encodes proteins SAT11 to SAT16, the largest of which encodes the putative reducing PKS SAT13. SAT11 is a cytochrome P450 monooxygenase, while SAT14 and SAT16 are probable acetyltransferases. The SC2 cluster may be regulated by the transcription factor SAT15. SC3 is a small cluster that encodes 5 proteins, SAT17 to SAT21. SAT21 is a putative MFS-type transporter which may have a role in exporting secondary metabolites. The four other proteins putatively encoded in SC3 include the taurine hydroxylase-like protein SAT17, the O-methyltransferase SAT18, the acetyltransferase SAT19, and the Cys6-type zinc finger SAT20, the latter being probably involved in regulation of SC3 expression. The sequence is that of Highly reducing polyketide synthase SAT13 from Stachybotrys chartarum (strain CBS 109288 / IBT 7711) (Toxic black mold).